Here is a 322-residue protein sequence, read N- to C-terminus: D-alanine--D-alanine ligase (322 aa).

An ATP-grasp domain is found at 110–310; that stretch reads KAVLAAAGIP…FDRLVFWIVE (201 aa). An ATP-binding site is contributed by 137 to 191; it reads MPPPYVVKPNAEGSSVGVSLVFEGANGPPRQLAAPDWAFGEQVMVEPYIPGLELA. Mg(2+) is bound by residues Asp263, Glu277, and Asn279.

The protein belongs to the D-alanine--D-alanine ligase family. Requires Mg(2+) as cofactor. The cofactor is Mn(2+).

The protein localises to the cytoplasm. The enzyme catalyses 2 D-alanine + ATP = D-alanyl-D-alanine + ADP + phosphate + H(+). The protein operates within cell wall biogenesis; peptidoglycan biosynthesis. In terms of biological role, cell wall formation. The protein is D-alanine--D-alanine ligase of Caulobacter sp. (strain K31).